A 489-amino-acid chain; its full sequence is MESTFSSPAEAALQREAGVPGLFTPPEDLDRVYELERVTKFVCDLGCQRVALQFPDQLLGDAGAVAVRLEEVTGSKMFILGDTAYGSCCVDVLGAEQAGAEALVHFGPACLSPPASLLPITFVLGQRSVALELCAKAFEARNPDPTAPVVLLSEPACAHALEALATLLRPKYQDLLISSPALPLPVGSPSSQPEPLERFGRRFPLSPGRCLEEYGAFYVGGSQASSDPVLDPDLSRLLLGWTPGRPFISCCPDTGQTQDQGVQAGRLRARRLYLIERARDAHVVGLLAGTLGVAQHREALAHLRKLTEAAGKRSYVLALGRPTPAKLANFPEMDIFVLLACPLGALAPQPSGGFFRPILTPCELEAACNPAWPPPGLAPHLTHYAELLPGSPFYVPLPPPESELWDTPDVSLISGDLRPPPSWKSSSDTGCSALTPRPQLELAESSPAASFLSSRSWQGLEPRLGQTPVKEAVQGRRGIAIAYEDEGSG.

An N-acetylmethionine modification is found at Met-1. Phosphoserine is present on Ser-7. Cys-89, Cys-110, and Cys-341 together coordinate [4Fe-4S] cluster. Residues 398–489 (PPPESELWDT…AIAYEDEGSG (92 aa)) form a required for function region. Thr-435 carries the phosphothreonine modification. 2 positions are modified to phosphoserine: Ser-446 and Ser-456. Position 467 is a phosphothreonine (Thr-467). A Phosphoserine modification is found at Ser-488.

This sequence belongs to the DPH1/DPH2 family. DPH2 subfamily. As to quaternary structure, component of the 2-(3-amino-3-carboxypropyl)histidine synthase complex composed of DPH1, DPH2, DPH3 and a NADH-dependent reductase. Interacts with DPH1. Requires [4Fe-4S] cluster as cofactor.

Its pathway is protein modification; peptidyl-diphthamide biosynthesis. Required for the first step of diphthamide biosynthesis, a post-translational modification of histidine which occurs in elongation factor 2. DPH1 and DPH2 transfer a 3-amino-3-carboxypropyl (ACP) group from S-adenosyl-L-methionine (SAM) to a histidine residue, the reaction is assisted by a reduction system comprising DPH3 and a NADH-dependent reductase. Facilitates the reduction of the catalytic iron-sulfur cluster found in the DPH1 subunit. In Cricetulus griseus (Chinese hamster), this protein is 2-(3-amino-3-carboxypropyl)histidine synthase subunit 2 (DPH2).